Here is a 256-residue protein sequence, read N- to C-terminus: Acetyl-coenzyme A carboxylase carboxyl transferase subunit alpha (256 aa).

A CoA carboxyltransferase C-terminal domain is found at 1-236; sequence MSDVARILKE…KTAIVDELAE (236 aa).

Belongs to the AccA family. In terms of assembly, acetyl-CoA carboxylase is a heterohexamer composed of biotin carboxyl carrier protein (AccB), biotin carboxylase (AccC) and two subunits each of ACCase subunit alpha (AccA) and ACCase subunit beta (AccD).

The protein localises to the cytoplasm. It carries out the reaction N(6)-carboxybiotinyl-L-lysyl-[protein] + acetyl-CoA = N(6)-biotinyl-L-lysyl-[protein] + malonyl-CoA. Its pathway is lipid metabolism; malonyl-CoA biosynthesis; malonyl-CoA from acetyl-CoA: step 1/1. Its function is as follows. Component of the acetyl coenzyme A carboxylase (ACC) complex. First, biotin carboxylase catalyzes the carboxylation of biotin on its carrier protein (BCCP) and then the CO(2) group is transferred by the carboxyltransferase to acetyl-CoA to form malonyl-CoA. This Streptococcus thermophilus (strain ATCC BAA-250 / LMG 18311) protein is Acetyl-coenzyme A carboxylase carboxyl transferase subunit alpha.